The following is an 81-amino-acid chain: Large ribosomal subunit protein bL31B (81 aa).

This sequence belongs to the bacterial ribosomal protein bL31 family. Type B subfamily. Part of the 50S ribosomal subunit.

The polypeptide is Large ribosomal subunit protein bL31B (Limosilactobacillus fermentum (strain NBRC 3956 / LMG 18251) (Lactobacillus fermentum)).